The sequence spans 181 residues: Large ribosomal subunit protein uL10 (181 aa).

This sequence belongs to the universal ribosomal protein uL10 family. Part of the ribosomal stalk of the 50S ribosomal subunit. The N-terminus interacts with L11 and the large rRNA to form the base of the stalk. The C-terminus forms an elongated spine to which L12 dimers bind in a sequential fashion forming a multimeric L10(L12)X complex.

Forms part of the ribosomal stalk, playing a central role in the interaction of the ribosome with GTP-bound translation factors. The polypeptide is Large ribosomal subunit protein uL10 (Nostoc sp. (strain PCC 7120 / SAG 25.82 / UTEX 2576)).